Reading from the N-terminus, the 387-residue chain is EARP-interacting protein homolog (387 aa).

WD repeat units follow at residues 132 to 172 (TAHG…SKAV), 182 to 222 (KGQL…QIYC), 226 to 266 (AHGQ…DPVK), 270 to 310 (EHSH…SEPF), and 345 to 385 (EHED…KYHI).

This sequence belongs to the WD repeat EIPR1 family.

In Gekko japonicus (Schlegel's Japanese gecko), this protein is EARP-interacting protein homolog.